A 98-amino-acid chain; its full sequence is Endoribonuclease antitoxin GhoS (98 aa).

Monomer. Post-translationally, unlike other TA antitoxins, this protein is stable.

Antitoxin component of a type V toxin-antitoxin (TA) system. Neutralizes the toxic effects of toxin GhoT by digesting ghoT transcripts in a sequence-specific manner. In concert with GhoT is involved in reducing cell growth during antibacterial stress. In Escherichia coli O157:H7, this protein is Endoribonuclease antitoxin GhoS.